The following is a 355-amino-acid chain: Molybdenum import ATP-binding protein ModC (355 aa).

One can recognise an ABC transporter domain in the interval 1 to 233 (MTLIVEAKQR…PSAAADRKEA (233 aa)). ATP is bound at residue 31–38 (GRSGSGKT). The 65-residue stretch at 291 to 355 (GLSALNILEG…AIIKTVALEG (65 aa)) folds into the Mop domain.

The protein belongs to the ABC transporter superfamily. Molybdate importer (TC 3.A.1.8) family. In terms of assembly, the complex is composed of two ATP-binding proteins (ModC), two transmembrane proteins (ModB) and a solute-binding protein (ModA).

The protein localises to the cell inner membrane. The enzyme catalyses molybdate(out) + ATP + H2O = molybdate(in) + ADP + phosphate + H(+). In terms of biological role, part of the ABC transporter complex ModABC involved in molybdenum import. Responsible for energy coupling to the transport system. This is Molybdenum import ATP-binding protein ModC from Rhizobium etli (strain ATCC 51251 / DSM 11541 / JCM 21823 / NBRC 15573 / CFN 42).